The following is a 217-amino-acid chain: Protein LURP-one-related 15 (217 aa).

At Met1 the chain carries N-acetylmethionine.

The protein belongs to the LOR family.

Might be related to the phospholipid scramblase and tubby-like superfamily of membrane tethered transcription factors. The chain is Protein LURP-one-related 15 from Arabidopsis thaliana (Mouse-ear cress).